Here is a 523-residue protein sequence, read N- to C-terminus: DNA-(apurinic or apyrimidinic site) endonuclease 2 (523 aa).

Glutamate 42 contributes to the Mg(2+) binding site. Residue tyrosine 151 is part of the active site. 3 residues coordinate Mg(2+): aspartate 191, asparagine 193, and aspartate 294. Aspartate 191 (proton donor/acceptor) is an active-site residue. The segment at methionine 348–arginine 392 is disordered. A compositionally biased stretch (polar residues) spans asparagine 353–valine 362. Positions 458, 461, 484, and 508 each coordinate Zn(2+). The GRF-type zinc finger occupies cysteine 458–tryptophan 517.

The protein belongs to the DNA repair enzymes AP/ExoA family. Mg(2+) is required as a cofactor. Requires Mn(2+) as cofactor.

Its subcellular location is the nucleus. It catalyses the reaction Exonucleolytic cleavage in the 3'- to 5'-direction to yield nucleoside 5'-phosphates.. In terms of biological role, DNA repair enzyme that cleaves apurinic/apyrimidinic (AP) sites and removes 3'-blocking groups present at single strand breaks of damaged DNA. Provides the majority of the AP-endonuclease (APE) activity. Repairs phleomycin D1-induced DNA damage. Plays a role in oxidative damage repair. This chain is DNA-(apurinic or apyrimidinic site) endonuclease 2 (apn2), found in Schizosaccharomyces pombe (strain 972 / ATCC 24843) (Fission yeast).